A 625-amino-acid chain; its full sequence is tRNA uridine 5-carboxymethylaminomethyl modification enzyme MnmG (625 aa).

FAD is bound by residues 13 to 18, valine 125, and serine 182; that span reads GGGHAG. NAD(+) is bound at residue 276–290; sequence GPRYCPSIEDKITRF. FAD is bound at residue glutamine 373.

It belongs to the MnmG family. Homodimer. Heterotetramer of two MnmE and two MnmG subunits. It depends on FAD as a cofactor.

It is found in the cytoplasm. NAD-binding protein involved in the addition of a carboxymethylaminomethyl (cmnm) group at the wobble position (U34) of certain tRNAs, forming tRNA-cmnm(5)s(2)U34. The polypeptide is tRNA uridine 5-carboxymethylaminomethyl modification enzyme MnmG (Lactococcus lactis subsp. cremoris (strain SK11)).